The chain runs to 60 residues: Single-pass membrane and coiled-coil domain-containing protein 4 homolog (60 aa).

The disordered stretch occupies residues 1–23; that stretch reads MRKLRGGQTKETRKQRQERKEEN. Over residues 8–23 the composition is skewed to basic and acidic residues; that stretch reads QTKETRKQRQERKEEN. The stretch at 8 to 33 forms a coiled coil; sequence QTKETRKQRQERKEENLKIQQQMKTI. The chain crosses the membrane as a helical span at residues 31–51; sequence KTIVLPTIGVIFLCIVVYVFL.

The protein belongs to the SMCO4 family.

It localises to the membrane. In Anopheles gambiae (African malaria mosquito), this protein is Single-pass membrane and coiled-coil domain-containing protein 4 homolog.